Here is a 479-residue protein sequence, read N- to C-terminus: Glutamate--tRNA ligase (479 aa).

The 'HIGH' region motif lies at 21–31 (PSPTGYLHVGG). The 'KMSKS' region motif lies at 248–252 (KLSKR). Residue Lys-251 coordinates ATP.

It belongs to the class-I aminoacyl-tRNA synthetase family. Glutamate--tRNA ligase type 1 subfamily. In terms of assembly, monomer.

It is found in the cytoplasm. The catalysed reaction is tRNA(Glu) + L-glutamate + ATP = L-glutamyl-tRNA(Glu) + AMP + diphosphate. In terms of biological role, catalyzes the attachment of glutamate to tRNA(Glu) in a two-step reaction: glutamate is first activated by ATP to form Glu-AMP and then transferred to the acceptor end of tRNA(Glu). The polypeptide is Glutamate--tRNA ligase (Haemophilus ducreyi (strain 35000HP / ATCC 700724)).